Reading from the N-terminus, the 341-residue chain is Ferrochelatase (341 aa).

H189 and E293 together coordinate Fe cation.

Belongs to the ferrochelatase family.

It localises to the cytoplasm. The catalysed reaction is heme b + 2 H(+) = protoporphyrin IX + Fe(2+). The protein operates within porphyrin-containing compound metabolism; protoheme biosynthesis; protoheme from protoporphyrin-IX: step 1/1. In terms of biological role, catalyzes the ferrous insertion into protoporphyrin IX. The chain is Ferrochelatase from Pseudomonas fluorescens (strain SBW25).